Reading from the N-terminus, the 243-residue chain is UDP-2,3-diacylglucosamine hydrolase (243 aa).

5 residues coordinate Mn(2+): Asp-8, His-10, Asp-41, Asn-79, and His-114. 79–80 (NR) contacts substrate. Asp-122, Lys-164, Lys-167, and His-195 together coordinate substrate. The Mn(2+) site is built by His-195 and His-197.

It belongs to the LpxH family. Mn(2+) serves as cofactor.

The protein resides in the cell inner membrane. The catalysed reaction is UDP-2-N,3-O-bis[(3R)-3-hydroxytetradecanoyl]-alpha-D-glucosamine + H2O = 2-N,3-O-bis[(3R)-3-hydroxytetradecanoyl]-alpha-D-glucosaminyl 1-phosphate + UMP + 2 H(+). The protein operates within glycolipid biosynthesis; lipid IV(A) biosynthesis; lipid IV(A) from (3R)-3-hydroxytetradecanoyl-[acyl-carrier-protein] and UDP-N-acetyl-alpha-D-glucosamine: step 4/6. Hydrolyzes the pyrophosphate bond of UDP-2,3-diacylglucosamine to yield 2,3-diacylglucosamine 1-phosphate (lipid X) and UMP by catalyzing the attack of water at the alpha-P atom. Involved in the biosynthesis of lipid A, a phosphorylated glycolipid that anchors the lipopolysaccharide to the outer membrane of the cell. The polypeptide is UDP-2,3-diacylglucosamine hydrolase (Vibrio vulnificus (strain YJ016)).